The chain runs to 94 residues: Neutrophil antibiotic peptide NP-1 (94 aa).

The N-terminal stretch at 1 to 19 (MRTLTLLTALLLLALHTQA) is a signal peptide. A propeptide spanning residues 20-62 (KSPQGTAEEAPDQEQLVMEDQDISISFGGDKGTALQDADVKAG) is cleaved from the precursor. Disulfide bonds link C65-C93, C67-C82, and C72-C92. A Phosphotyrosine modification is found at Y84.

This sequence belongs to the alpha-defensin family. As to expression, highest expression in bone marrow and to a much lesser extent in small intestine.

It is found in the secreted. In terms of biological role, active in vitro against S.aureus, fungi, Gram-positive and Gram-negative bacteria and to a lesser extent against an enveloped virus. The polypeptide is Neutrophil antibiotic peptide NP-1 (Rattus norvegicus (Rat)).